The sequence spans 346 residues: KH domain-containing, RNA-binding, signal transduction-associated protein 2 (346 aa).

The region spanning Leu-65–Leu-131 is the KH domain. Residues Leu-175–Ser-291 form a disordered region. Residues Leu-195–Gly-224 are compositionally biased toward low complexity. Residues Tyr-268 to Asp-287 show a composition bias toward acidic residues.

This sequence belongs to the KHDRBS family.

It is found in the nucleus. Its function is as follows. RNA-binding protein that plays a role in the regulation of alternative splicing. The chain is KH domain-containing, RNA-binding, signal transduction-associated protein 2 (khdrbs2) from Danio rerio (Zebrafish).